Reading from the N-terminus, the 117-residue chain is MKHLGKHLIMELWDCDKQALDNQAGVEKMLEDATNSCGATLICIRTHKFSPQGVTGVAVLAESHISIHTWPEIGYAAMDIFTCGEHVNPEDAIPAIRDFLKPAKFDIIDIKRGSMVE.

Ser63 functions as the Schiff-base intermediate with substrate; via pyruvic acid in the catalytic mechanism. At Ser63 the chain carries Pyruvic acid (Ser); by autocatalysis. Catalysis depends on His68, which acts as the Proton acceptor; for processing activity. Cys83 (proton donor; for catalytic activity) is an active-site residue.

Belongs to the prokaryotic AdoMetDC family. Type 1 subfamily. As to quaternary structure, heterotetramer of two alpha and two beta chains arranged as a dimer of alpha/beta heterodimers. It depends on pyruvate as a cofactor. Post-translationally, is synthesized initially as an inactive proenzyme. Formation of the active enzyme involves a self-maturation process in which the active site pyruvoyl group is generated from an internal serine residue via an autocatalytic post-translational modification. Two non-identical subunits are generated from the proenzyme in this reaction, and the pyruvate is formed at the N-terminus of the alpha chain, which is derived from the carboxyl end of the proenzyme. The post-translation cleavage follows an unusual pathway, termed non-hydrolytic serinolysis, in which the side chain hydroxyl group of the serine supplies its oxygen atom to form the C-terminus of the beta chain, while the remainder of the serine residue undergoes an oxidative deamination to produce ammonia and the pyruvoyl group blocking the N-terminus of the alpha chain.

It carries out the reaction S-adenosyl-L-methionine + H(+) = S-adenosyl 3-(methylsulfanyl)propylamine + CO2. Its pathway is amine and polyamine biosynthesis; S-adenosylmethioninamine biosynthesis; S-adenosylmethioninamine from S-adenosyl-L-methionine: step 1/1. In terms of biological role, catalyzes the decarboxylation of S-adenosylmethionine to S-adenosylmethioninamine (dcAdoMet), the propylamine donor required for the synthesis of the polyamines spermine and spermidine from the diamine putrescine. The sequence is that of S-adenosylmethionine decarboxylase proenzyme from Methanococcus aeolicus (strain ATCC BAA-1280 / DSM 17508 / OCM 812 / Nankai-3).